Here is a 345-residue protein sequence, read N- to C-terminus: Protein RecA (345 aa).

65 to 72 (GPESSGKT) provides a ligand contact to ATP.

This sequence belongs to the RecA family.

The protein localises to the cytoplasm. In terms of biological role, can catalyze the hydrolysis of ATP in the presence of single-stranded DNA, the ATP-dependent uptake of single-stranded DNA by duplex DNA, and the ATP-dependent hybridization of homologous single-stranded DNAs. It interacts with LexA causing its activation and leading to its autocatalytic cleavage. The sequence is that of Protein RecA from Sulfurimonas denitrificans (strain ATCC 33889 / DSM 1251) (Thiomicrospira denitrificans (strain ATCC 33889 / DSM 1251)).